The primary structure comprises 1469 residues: MGKRRQGPINKKVDFLPNKLNKYSIRKFTVGTASILLGSTLIFGSSSHEAKAAEEKQVDPITQANQNDSSERSLENTNQPTVNNEAPQMSSTLQAEEGSNAEAPNVPTIKANSDNDTQTQFSEAPTRNDLARKEDIPAVSKNEELQSSQPNTDSKIEPTTSEPVNLNYSSPFMSLLSMPADSSSNNTKNTIDIPPTTVKGRDNYDFYGRVDIQSNPTDLNATNLTRYNYGQPPGTTTAGAVQFKNQVSFDKDFDFNIRVANNRQSNTTGADGWGFMFSKKDGDDFLKNGGILREKGTPSAAGFRIDTGYYNNDPLDKIQKQAGQGYRGYGTFVKNDSQGNTSKVGSGTPSTDFLNYADNTTNDLDGKFHGQKLNNVNLKYNASNQTFTATYAGKTWTATLSELGLSPTDSYNFLVTSSQYGNGNSGTYADGVMRADLDGATLTYTPKAVDGDPITSTKEIPFNKKREFDPNLAPGTEKVVQKGEPGIETTTTPTYVNPNTGEKVGEGTPTTKITKQPVDEIVHYGGEEIKPGHKDEFDPNAPKGSQTTQPGKPGVKNPDTGEVVTPPVDDVTKYGPVDGDPITSTEEIPFDKKREFNPDLKPGEERVKQKGEPGTKTITTPTTKNPLTGEKVGEGEPTEKITKQPVDEITEYGGEEIKPGHKDEFDPNAPKGSQEDVPGKPGVKNPDTGEVVTPPVDDVTKYGPVDGDPITSTEEIPFDKKREFDPNLAPGTEKVVQKGEPGTKTITTPTTKNPLTGEKVGEGEPTEKITKQPVDEIVHYGGEEIKPGHKDEFDPNAPKGSQEDVPGKPGVKNPDTGEVVTPPVDDVTKYGPVDGDPITSTEEIPFDKKREFNPDLKPGEERVKQKGEPGTKTITTPTTKNPLTGEKVGEGEPTEKVTKQPVDEIVHYGGEEIKPGHKDEFDPNAPKGSQEDVPGKPGVKNPDTGEVVTPPVDDVTKYGPVDGDPITSTEEIPFDKKREFDPNLAPGTEKVVQKGEPGTKTITTPTTKNPLTGEKVGEGEPTEKITKQPVDEIVHYGGEEIKPGHKDEFDPNAPKGSQTTQPGKPGVKNPDTGEVVTPPVDDVTKYGPVDGDPITSTEEIPFDKKREFDPNLAPGTEKVVQKGEPGTKTITTPTTKNPLTGEKVGEGEPTEKITKQPVDEIVHYGGEQIPQGHKDEFDPNAPVDSKTEVPGKPGVKNPDTGEVVTPPVDDVTKYGPKVGNPITSTEEIPFDKKRVFNPDLKPGEERVKQKGEPGTKTITTPILVNPITGEKVGEGKSTEKVTKQPVDEIVEYGPTKAEPGKPAEPGKPAEPGKPAEPGKPAEPGTPAEPGKPAEPGKPAEPGKPAEPGKPAEPGKPAEPGTPAEPGKPAEPGKPAEPGKPAEPGTPAEPGKPAEPGTPAEPGKPAEPGTPTQSGAPEQPNRSMHSTDNKNQLPDTGENRQANEGTLVGSLLAIVGSLFIFGRRKKGNEK.

The first 52 residues, 1–52, serve as a signal peptide directing secretion; it reads MGKRRQGPINKKVDFLPNKLNKYSIRKFTVGTASILLGSTLIFGSSSHEAKA. 3 disordered regions span residues 52-164, 486-511, and 528-1443; these read AAEE…SEPV, GIET…TPTT, and EIKP…QANE. 2 stretches are compositionally biased toward polar residues: residues 75–94 and 110–125; these read ENTN…STLQ and KANS…SEAP. Basic and acidic residues predominate over residues 129–144; sequence DLARKEDIPAVSKNEE. Positions 145-164 are enriched in polar residues; it reads LQSSQPNTDSKIEPTTSEPV. G5 domains lie at 446-528, 574-656, 702-784, 830-912, 958-1040, 1086-1168, and 1211-1296; these read PKAV…GGEE, YGPV…GGEE, YGPV…GGEQ, and VTKY…GPTK. A compositionally biased stretch (low complexity) spans 489–500; the sequence is TTTTPTYVNPNT. Composition is skewed to basic and acidic residues over residues 528–537 and 589–613; these read EIKPGHKDEF and PFDK…KGEP. Residues 614–629 are compositionally biased toward low complexity; sequence GTKTITTPTTKNPLTG. Basic and acidic residues-rich tracts occupy residues 631 to 646 and 655 to 665; these read KVGE…KQPV and EEIKPGHKDEF. Residues 738 to 757 show a composition bias toward low complexity; that stretch reads KGEPGTKTITTPTTKNPLTG. Composition is skewed to basic and acidic residues over residues 759 to 793 and 845 to 869; these read KVGE…KDEF and PFDK…KGEP. The span at 870 to 885 shows a compositional bias: low complexity; it reads GTKTITTPTTKNPLTG. Over residues 887 to 921 the composition is skewed to basic and acidic residues; it reads KVGEGEPTEKVTKQPVDEIVHYGGEEIKPGHKDEF. Residues 994–1013 show a composition bias toward low complexity; the sequence is KGEPGTKTITTPTTKNPLTG. Basic and acidic residues predominate over residues 1015–1049; that stretch reads KVGEGEPTEKITKQPVDEIVHYGGEEIKPGHKDEF. Residues 1122–1141 are compositionally biased toward low complexity; that stretch reads KGEPGTKTITTPTTKNPLTG. Composition is skewed to basic and acidic residues over residues 1143 to 1162, 1229 to 1253, and 1271 to 1286; these read KVGE…DEIV, PFDK…KGEP, and KVGE…KQPV. Residues 1409 to 1443 show a composition bias toward polar residues; that stretch reads TPTQSGAPEQPNRSMHSTDNKNQLPDTGENRQANE. An LPXTG sorting signal motif is present at residues 1432–1436; that stretch reads LPDTG. Pentaglycyl murein peptidoglycan amidated threonine is present on T1435. The propeptide at 1436–1469 is removed by sortase; sequence GENRQANEGTLVGSLLAIVGSLFIFGRRKKGNEK.

It is found in the secreted. The protein localises to the cell wall. The sequence is that of Accumulation-associated protein from Staphylococcus epidermidis (strain ATCC 12228 / FDA PCI 1200).